Reading from the N-terminus, the 423-residue chain is Glutaminase (423 aa).

The glutaminase stretch occupies residues 27–312 (GEVAQYIPQL…LSEDMGLHLM (286 aa)). Substrate-binding residues include serine 69, asparagine 119, glutamate 165, asparagine 172, tyrosine 196, tyrosine 248, and valine 266. The region spanning 321–423 (AVRAIEERGD…SPQVDDPEEL (103 aa)) is the STAS domain.

This sequence belongs to the glutaminase family. In terms of assembly, homotetramer.

It catalyses the reaction L-glutamine + H2O = L-glutamate + NH4(+). The chain is Glutaminase (glsA) from Corynebacterium efficiens (strain DSM 44549 / YS-314 / AJ 12310 / JCM 11189 / NBRC 100395).